A 730-amino-acid polypeptide reads, in one-letter code: Polyphosphate kinase (730 aa).

The segment covering 1–21 (MMRHDRNVTEIDAETRPDENL) has biased composition (basic and acidic residues). Residues 1–39 (MMRHDRNVTEIDAETRPDENLWHSGDSAVGAPPAATPAA) form a disordered region. Position 86 (Asn-86) interacts with ATP. Residues Arg-423 and Arg-453 each coordinate Mg(2+). The active-site Phosphohistidine intermediate is His-483. ATP contacts are provided by Tyr-516, Arg-612, and His-640.

This sequence belongs to the polyphosphate kinase 1 (PPK1) family. Requires Mg(2+) as cofactor. In terms of processing, an intermediate of this reaction is the autophosphorylated ppk in which a phosphate is covalently linked to a histidine residue through a N-P bond.

It carries out the reaction [phosphate](n) + ATP = [phosphate](n+1) + ADP. Functionally, catalyzes the reversible transfer of the terminal phosphate of ATP to form a long-chain polyphosphate (polyP). The sequence is that of Polyphosphate kinase from Mycobacterium avium (strain 104).